A 632-amino-acid polypeptide reads, in one-letter code: Probable potassium transport system protein Kup 1 (632 aa).

A run of 12 helical transmembrane segments spans residues 19–39 (LVLG…LYAL), 59–79 (VISM…VVFV), 110–130 (VLMM…VITP), 146–166 (PQLS…LFLI), 178–198 (FGPI…LHLV), 213–233 (ITFL…VFLV), 256–276 (WFVL…AMLL), 298–318 (MVLL…SGAF), 346–366 (IYLP…VISF), 373–393 (AAAY…LAAV), 403–423 (PALV…FFAA), and 428–448 (VAEG…LLMT).

Belongs to the HAK/KUP transporter (TC 2.A.72) family.

Its subcellular location is the cell inner membrane. The enzyme catalyses K(+)(in) + H(+)(in) = K(+)(out) + H(+)(out). Functionally, transport of potassium into the cell. Likely operates as a K(+):H(+) symporter. The polypeptide is Probable potassium transport system protein Kup 1 (Cupriavidus necator (strain ATCC 17699 / DSM 428 / KCTC 22496 / NCIMB 10442 / H16 / Stanier 337) (Ralstonia eutropha)).